A 170-amino-acid chain; its full sequence is Calcineurin subunit B type 2 (170 aa).

Gly2 carries the N-myristoyl glycine lipid modification. EF-hand domains lie at Asp18 to Met46, Gln50 to Arg85, Asp87 to Asp122, and Gln128 to His163. Asp63, Asp65, Asp67, Gln69, Glu74, Asp100, Asp102, Asp104, Tyr106, and Glu111 together coordinate Ca(2+). A calcineurin A binding region spans residues Gln131–Thr136. Ca(2+) contacts are provided by Asp141, Asp143, Asp145, Lys147, and Glu152.

It belongs to the calcineurin regulatory subunit family. As to quaternary structure, forms a complex composed of a calmodulin-dependent catalytic subunit (also known as calcineurin A) and a regulatory Ca(2+)-binding subunit (also known as calcineurin B). There are three catalytic subunits, each encoded by a separate gene (PPP3CA, PPP3CB, and PPP3CC) and two regulatory subunits which are also encoded by separate genes (PPP3R1 and PPP3R2). Interacts with SPATA33 (via PQIIIT motif).

It is found in the mitochondrion. Functionally, regulatory subunit of calcineurin, a calcium-dependent, calmodulin stimulated protein phosphatase. Confers calcium sensitivity. The polypeptide is Calcineurin subunit B type 2 (PPP3R2) (Bos taurus (Bovine)).